The following is a 510-amino-acid chain: Inositol-3-phosphate synthase (510 aa).

NAD(+) is bound by residues Gly-70, Gly-71, Asn-72, Asn-73, Asp-143, Ile-180, Gln-190, Arg-193, Thr-230, Ala-231, Asn-232, Thr-233, Gly-281, Ser-282, Asp-306, Ser-309, Asn-340, Asn-341, Asp-342, Lys-355, Gly-393, Asp-394, Asp-422, and Ser-423.

It belongs to the myo-inositol 1-phosphate synthase family. It depends on NAD(+) as a cofactor.

The protein resides in the cytoplasm. The protein localises to the cytosol. It localises to the nucleus. The enzyme catalyses D-glucose 6-phosphate = 1D-myo-inositol 3-phosphate. It participates in polyol metabolism; myo-inositol biosynthesis; myo-inositol from D-glucose 6-phosphate: step 1/2. Key enzyme in myo-inositol biosynthesis pathway that catalyzes the conversion of glucose 6-phosphate to 1-myo-inositol 1-phosphate in a NAD-dependent manner. This is Inositol-3-phosphate synthase from Hordeum vulgare (Barley).